The chain runs to 100 residues: NADH-quinone oxidoreductase subunit K (100 aa).

A run of 3 helical transmembrane segments spans residues Ile-2–Ile-22, Ile-29–Ile-49, and Leu-63–Trp-83.

The protein belongs to the complex I subunit 4L family. NDH-1 is composed of 14 different subunits. Subunits NuoA, H, J, K, L, M, N constitute the membrane sector of the complex.

The protein resides in the cell inner membrane. It catalyses the reaction a quinone + NADH + 5 H(+)(in) = a quinol + NAD(+) + 4 H(+)(out). Functionally, NDH-1 shuttles electrons from NADH, via FMN and iron-sulfur (Fe-S) centers, to quinones in the respiratory chain. The immediate electron acceptor for the enzyme in this species is believed to be ubiquinone. Couples the redox reaction to proton translocation (for every two electrons transferred, four hydrogen ions are translocated across the cytoplasmic membrane), and thus conserves the redox energy in a proton gradient. This chain is NADH-quinone oxidoreductase subunit K, found in Campylobacter curvus (strain 525.92).